The following is a 129-amino-acid chain: Small ribosomal subunit protein uS11 (129 aa).

Belongs to the universal ribosomal protein uS11 family. As to quaternary structure, part of the 30S ribosomal subunit. Interacts with proteins S7 and S18. Binds to IF-3.

Functionally, located on the platform of the 30S subunit, it bridges several disparate RNA helices of the 16S rRNA. Forms part of the Shine-Dalgarno cleft in the 70S ribosome. The sequence is that of Small ribosomal subunit protein uS11 from Aeromonas hydrophila subsp. hydrophila (strain ATCC 7966 / DSM 30187 / BCRC 13018 / CCUG 14551 / JCM 1027 / KCTC 2358 / NCIMB 9240 / NCTC 8049).